A 517-amino-acid chain; its full sequence is Heat shock 70-related protein 5 (517 aa).

It belongs to the heat shock protein 70 family.

In terms of biological role, may function in protein folding and assembly, and disassembly of protein complexes. The polypeptide is Heat shock 70-related protein 5 (Dictyostelium discoideum (Social amoeba)).